Reading from the N-terminus, the 1254-residue chain is MGVGDPLPLPPEKNRREVNKPPDIASTSSSSASAVNNARLSDAPILLFVYFHKAFRAQLAELQFLAGDTVRSGSDLAVELRSKFEFLKLVYKYHSAAEDEVIFSALDTRVKNIVFNYSLEHDATDDLFTSVFHWLNVLEEEQGNRADVLREVVLCIGTIQSSICQHMLKEERQVFPLMIENFSFEEQASLVWQFICSVPVMVLEEIFPWMTSLLSPKEKSEVETCFKEVVPNELSLQLVINSWLIDDSQSSLTALTKIMKGVQSVEVSENMTNSQTNSSSSGVFQRFWQWSKKMSFSSPNTGHILVHGIHLWHNAIRKDLVDIQKGLCQLTFPSLSLDLNVLVVRLNFLADVLIFYSNAFKTFFYPVFEDMVDQQHSSSSKQFTIDGHVENFKKSLDLETRAGSDNFVITLQEKLESLILTVAKQFSIEETEVFPIISKNCNIEMQRQLLYRSIHFLPLGLLKCVIMWFSAQLPEDECQSIIHYLSSEDSFPNKPFAHLLLQWFRFGYSGKTPVESFWNELSFMFKPRCSFEEELTEEASGSFFQQSPQKLFKVSDPYSMDPPAGYMNETPYSSAMNQQILIPGKLRPLLHLPDLFGDKTIGEHLTMDLKPIDLIFYFHKAMKKDLDYLVRGSARLATDYSFLGEFQQRFHLIKFLYQIHSDAEDEIAFPALEAKGKLQNISQSYSIDHELEVEHLNKVSFLLNELAELNMLVLDHKNVKYEKLCMSLQDICKSIHKLLSEHLHREETELWCLFRDCFTIEEQEKIIACMLGRISGEILQDMIPWLMESLIPDEQHAVMSLWRQATRKTMFGEWLTEWYNSHAVEEETEEANKDPSENSDPLDVVWSYLFEGAADEYKGSICSKPLEETELKGIMNKPLGKAAPNNKVEFGNKEENHLEISGSKKVCTGADETKYKEQTDSNAQAFQMSHNTSQSGQDSRYECLLSMSQEDVEATIRRISRDSSLDPQKKSYIIQNLLMSRWIATQRIYNLEPSILSSNREAVPGQNPSYRDPHKLIFGCKHYKRSCKLLAPCCNKLYTCIRCHDEEVDHLLDRKQITKMMCMKCMIIQPVGASCSNISCSSSMGKYYCKICKLFDDDREIYHCPYCNLCRLGKGLSIDYFHCMKCNACMSRLIVEHVCREKCLEDNCPICHEYIFTSNSPVKALPCGHVMHSTCFQEYTCSHYTCPICSKSLGDMQVYFRMLDALLAEQKMPDEYLNQTQVILCNDCGRKGNAPYHWLYHKCSSCASYNTRLF.

The segment at 1–30 (MGVGDPLPLPPEKNRREVNKPPDIASTSSS) is disordered. The chain crosses the membrane as a helical span at residues 454–474 (IHFLPLGLLKCVIMWFSAQLP). A CHY-type zinc finger spans residues 1013–1082 (PHKLIFGCKH…ASCSNISCSS (70 aa)). Residues Cys1020, His1022, Cys1033, Cys1034, Cys1040, Cys1043, His1044, His1050, Cys1062, Cys1065, Cys1075, Cys1080, Cys1089, Cys1092, His1103, Cys1104, Cys1107, Cys1110, His1122, Cys1123, Cys1126, Cys1129, His1137, and Cys1139 each coordinate Zn(2+). Residues 1084–1147 (MGKYYCKICK…VCREKCLEDN (64 aa)) form a CTCHY-type zinc finger. The segment at 1148-1190 (CPICHEYIFTSNSPVKALPCGHVMHSTCFQEYTCSHYTCPICS) adopts an RING-type; atypical zinc-finger fold.

As to quaternary structure, binds zinc and iron ions.

It is found in the membrane. The protein localises to the nucleus. It participates in protein modification; protein ubiquitination. Functionally, probable E3 ubiquitin-protein ligase that may regulate the response to iron deficiency and thus contributes to iron homeostasis. In Arabidopsis thaliana (Mouse-ear cress), this protein is Zinc finger protein BRUTUS-like At1g18910.